Here is a 217-residue protein sequence, read N- to C-terminus: Adenylate kinase (217 aa).

10–15 provides a ligand contact to ATP; it reads GIGKGT. The interval 30–59 is NMP; the sequence is ATGDIFRKNFQENTPLGKESKKFINKGLLV. Residues Thr31, Arg36, 57–59, 85–88, and Gln92 each bind AMP; these read LLV and GFPR. Positions 126 to 163 are LID; the sequence is GRRICSHCGKVYHLDNLPPKIEGICDKDQKKLIQREDD. Arg127 is an ATP binding site. Zn(2+) is bound by residues Cys130 and Cys133. 136–137 contributes to the ATP binding site; sequence VY. 2 residues coordinate Zn(2+): Cys150 and Asp153. Residues Arg160 and Arg171 each contribute to the AMP site. Gln199 lines the ATP pocket.

The protein belongs to the adenylate kinase family. In terms of assembly, monomer.

The protein resides in the cytoplasm. It carries out the reaction AMP + ATP = 2 ADP. Its pathway is purine metabolism; AMP biosynthesis via salvage pathway; AMP from ADP: step 1/1. Catalyzes the reversible transfer of the terminal phosphate group between ATP and AMP. Plays an important role in cellular energy homeostasis and in adenine nucleotide metabolism. This is Adenylate kinase from Phytoplasma australiense.